The primary structure comprises 129 residues: Fluoride-specific ion channel FluC 2 (129 aa).

Transmembrane regions (helical) follow at residues 3–23, 32–52, 59–79, and 90–110; these read FLYV…MNLW, ATLA…PFLA, LVLL…FSAF, and GEVV…LVMV. Positions 71 and 74 each coordinate Na(+).

The protein belongs to the fluoride channel Fluc/FEX (TC 1.A.43) family.

It is found in the cell membrane. It catalyses the reaction fluoride(in) = fluoride(out). Its activity is regulated as follows. Na(+) is not transported, but it plays an essential structural role and its presence is essential for fluoride channel function. Its function is as follows. Fluoride-specific ion channel. Important for reducing fluoride concentration in the cell, thus reducing its toxicity. This Listeria innocua serovar 6a (strain ATCC BAA-680 / CLIP 11262) protein is Fluoride-specific ion channel FluC 2.